Consider the following 464-residue polypeptide: Argininosuccinate lyase (464 aa).

This sequence belongs to the lyase 1 family. Argininosuccinate lyase subfamily.

Its subcellular location is the cytoplasm. It catalyses the reaction 2-(N(omega)-L-arginino)succinate = fumarate + L-arginine. The protein operates within amino-acid biosynthesis; L-arginine biosynthesis; L-arginine from L-ornithine and carbamoyl phosphate: step 3/3. This Pseudomonas syringae pv. syringae (strain B728a) protein is Argininosuccinate lyase.